The sequence spans 72 residues: N-alpha-acetyltransferase 38, NatC auxiliary subunit (72 aa).

A Sm domain is found at 3-72 (NGEILLTSWL…KHIKSFSVRA (70 aa)).

In terms of assembly, component of the N-terminal acetyltransferase C (NatC) complex, composed of the catalytic subunit Naa30, a large auxiliary subunit Naa35 and a small auxiliary subunit Naa38.

The protein localises to the endoplasmic reticulum. Functionally, component of the NatC N-terminal acetyltransferase, which associates with the ribosome to acetylate nascent protein chains in a cotranslational manner. NatC acetylates protein N-termini starting with methionine, followed by a hydrophobic or amphipathic amino acid, with amino acids at positions 3 and 4 also contributing to NatC recognition. The first 4 amino acids of cognate substrates are recognized at the Naa30-Naa35 interface. NatC-dependent acetylation targets various substrate proteins to specific subcellular sites. The polypeptide is N-alpha-acetyltransferase 38, NatC auxiliary subunit (naa38) (Schizosaccharomyces pombe (strain 972 / ATCC 24843) (Fission yeast)).